A 167-amino-acid chain; its full sequence is Lipoprotein signal peptidase (167 aa).

The next 3 membrane-spanning stretches (helical) occupy residues 7 to 27 (LFLLLGLTLTAGLDQAVKYWV), 61 to 81 (FSHWGIIAITIIVIIFLLWLW), and 87 to 107 (NKFLMRFGLVLIIGGAIGNLI). Catalysis depends on residues Asp-117 and Asp-136. Residues 126-146 (IFYFAIFNLADSFITLGVIVI) traverse the membrane as a helical segment.

It belongs to the peptidase A8 family.

It is found in the cell inner membrane. It carries out the reaction Release of signal peptides from bacterial membrane prolipoproteins. Hydrolyzes -Xaa-Yaa-Zaa-|-(S,diacylglyceryl)Cys-, in which Xaa is hydrophobic (preferably Leu), and Yaa (Ala or Ser) and Zaa (Gly or Ala) have small, neutral side chains.. Its pathway is protein modification; lipoprotein biosynthesis (signal peptide cleavage). In terms of biological role, this protein specifically catalyzes the removal of signal peptides from prolipoproteins. This is Lipoprotein signal peptidase from Bartonella tribocorum (strain CIP 105476 / IBS 506).